The following is a 1166-amino-acid chain: Reverse gyrase (1166 aa).

The RG N-terminal-type zinc-finger motif lies at 1–40; sequence MINVMYKNSCPNCGGDISADRLLNGLPCETCLPYINGIDG. Zn(2+) is bound by residues Cys10, Cys13, Cys28, and Cys31. ATP-binding positions include Gln92 and 109 to 116; that span reads APTGLGKT. One can recognise a Helicase ATP-binding domain in the interval 96–285; the sequence is LRRLVSNQSF…ALRLLTGFEP (190 aa). Positions 190 to 193 match the DEAD box motif; the sequence is DDAD. Positions 576 to 1166 are topoisomerase I; it reads FNISTGLLIV…VNPLKSEQNV (591 aa). Positions 580–743 constitute a Toprim domain; the sequence is TGLLIVESPT…NIYRITYHEI (164 aa). Residue Glu586 coordinates Mg(2+). Residues 662 to 689 form an RG C-terminal-type zinc finger; the sequence is IKKCLDCNKTFSIASDKCPYCGSTNVQT. Positions 665, 668, 679, and 682 each coordinate Zn(2+). Asp712 serves as a coordination point for Mg(2+). One can recognise a Topo IA-type catalytic domain in the interval 759–1157; the sequence is NTNLVMSQIV…EIFSEISTLV (399 aa). Catalysis depends on Tyr903, which acts as the O-(5'-phospho-DNA)-tyrosine intermediate.

It in the N-terminal section; belongs to the DEAD box helicase family. DDVD subfamily. The protein in the C-terminal section; belongs to the type IA topoisomerase family. Monomer. The cofactor is Zn(2+). Mg(2+) is required as a cofactor.

The protein localises to the cytoplasm. It catalyses the reaction ATP + H2O = ADP + phosphate + H(+). With respect to regulation, inhibited by UV light-induced lesions; substrate is completely cleaved but a nicked form accumulates, suggesting the reaction is blocked between the cleavage and ligation steps. Inhibited by actinomycin D; substrate DNA remains negatively supercoiled in this case. Activity is stimulated by SSB from S.solfataricus strain P2. Positive supercoiling is inhibited by Sul7d (also called Sso7d) from S.solfataricus strain MT4; SSB from S.solfataricus strain P2 relieves this inhibition. Functionally, modifies the topological state of DNA by introducing positive supercoils in an ATP-dependent process. Increases the linking number in steps of +1. In vitro requires high concentrations to supercoil negatively supercoiled DNA, relaxes plasmid DNA first; DNA single-strand binding protein (SSB) from S.solfataricus strain P2 stimulates positive supercoiling. SSB stimulates DNA-binding by reverse gyrase, and thus all subsequent steps. Binds to single-stranded DNA, transiently cleaves and then rejoins the ends, introducing a positive supercoil in the process. The scissile phosphodiester is attacked by the catalytic tyrosine of the enzyme, resulting in the formation of a DNA-(5'-phosphotyrosyl)-enzyme intermediate. May be involved in DNA damage response. Probably involved in rewinding DNA strands in regions of the chromosome that have opened up to allow replication, transcription, DNA repair and/or for DNA protection. The sequence is that of Reverse gyrase from Saccharolobus shibatae (strain ATCC 51178 / DSM 5389 / JCM 8931 / NBRC 15437 / B12) (Sulfolobus shibatae).